Reading from the N-terminus, the 613-residue chain is Ectonucleoside triphosphate diphosphohydrolase 4 (613 aa).

The Cytoplasmic portion of the chain corresponds to 1-33 (MGRIGISCLFPASWHFSISPVGCPRILNTNLRQ). Residues 34–54 (IVVISILAAAVSLLYFSVVII) traverse the membrane as a helical segment. Residues 55 to 559 (RSKYGWLSKD…AGHAHWRGVS (505 aa)) are Lumenal-facing. E222 functions as the Proton acceptor in the catalytic mechanism. Cysteines 368 and 395 form a disulfide. N404 and N407 each carry an N-linked (GlcNAc...) asparagine glycan. C461 and C490 are joined by a disulfide. Residues 560–580 (FVYNHYLFSGCFLVVLLSILL) form a helical membrane-spanning segment. Topologically, residues 581–613 (YLLRLRRIHRRAPRTGSLWMEEGLPSQKGPGPL) are cytoplasmic.

It belongs to the GDA1/CD39 NTPase family. Ca(2+) is required as a cofactor. It depends on Mg(2+) as a cofactor. Ubiquitous.

It localises to the cytoplasmic vesicle. Its subcellular location is the autophagosome membrane. It is found in the lysosome membrane. The protein localises to the golgi apparatus membrane. It carries out the reaction a ribonucleoside 5'-triphosphate + H2O = a ribonucleoside 5'-diphosphate + phosphate + H(+). It catalyses the reaction a ribonucleoside 5'-diphosphate + H2O = a ribonucleoside 5'-phosphate + phosphate + H(+). The catalysed reaction is UDP + H2O = UMP + phosphate + H(+). The enzyme catalyses UTP + H2O = UDP + phosphate + H(+). It carries out the reaction CTP + H2O = CDP + phosphate + H(+). It catalyses the reaction GDP + H2O = GMP + phosphate + H(+). The catalysed reaction is 5-methyl-UTP + H2O = 5-methyl-UDP + phosphate + H(+). Catalyzes the hydrolysis of nucleoside triphosphates and diphosphates in a calcium- or magnesium-dependent manner, with a preference for pyrimidines. Preferentially hydrolyzes UTP and TTP on UTP and TTP. AMP, ADP, ATP and UMP are not substrates. Preferentially activated by Ca(2+) over Mg(2+). Functionally, has a broad substrate specificity with the ability of cleaving all nucleotide di- and triphosphates with the exception of adenosine di- and triphosphate (ADP and ATP). Preferentially hydrolyzes CTP, UDP, CDP, GTP and GDP. Can use either Ca(2+) or Mg(2+) equally. This is Ectonucleoside triphosphate diphosphohydrolase 4 (Entpd4) from Mus musculus (Mouse).